The sequence spans 381 residues: Testis-specific expressed protein 55 (381 aa).

2 disordered regions span residues 1-176 and 292-317; these read MDEP…SDPH and TTEYTSDTTPVFDQGRSSQRSSQSSR. Composition is skewed to basic and acidic residues over residues 8–24 and 65–103; these read SLNHENTTRAPDNEKNN and RTSEEAEQRSSQPTEHRLPGHAERRASQQAERRLSERRT. Polar residues predominate over residues 104–113; sequence SQPPNQQLPS. The segment covering 114–125 has biased composition (basic and acidic residues); the sequence is HSERKTSGKIDG. Residues 134–143 show a composition bias toward acidic residues; the sequence is TDQETSEFDD. 2 stretches are compositionally biased toward polar residues: residues 147 to 163 and 292 to 302; these read SASTDYLSARSQQQEYN and TTEYTSDTTPV. The segment covering 307–317 has biased composition (low complexity); the sequence is RSSQRSSQSSR.

As to expression, testis-specific.

It is found in the nucleus. This Mus musculus (Mouse) protein is Testis-specific expressed protein 55.